Here is a 1027-residue protein sequence, read N- to C-terminus: MAGKARVHELAKELGVTSKEVLNKLAEQGEYVKSASSTVEAPVARRLRDAFPKSGGKKGGGDSNGRAGGAKPAPPRPPESSGRTEAQAPKPGPKPGPRTETPSGERPKPGPKPGPKPGPKAPAPETKPFEEAPAPAAKADAPAQPRSEQPRSEQPRSEQPRSEQPRSERSGPKPGGPKPGPKPGPKPGPRGGGDADAGVVPPKPQSPKPGPRSPRVGNNPFGVGSGAPAQRPPRPGPGGGQRQGGQGPGRGGPQGGRPDRQGGGGQGAGTAPAGGDRAPRGEGGGGGNRPNPGMMPPRPNPGMMPSRPARSGGGPGGGRGGGRGGPGGGGGGRPGGGGGGGRPGGGGGGFRGGGGPGAGAGTGAPAGGGFRGRPGGGGRPGGPGGRGGAAGAFGRPGGPARRGRKSKRQKRQEYMDNMQAPSVGGVRLPRGNGESVRLRRGASLTDFAEKINANPASLVQAMFHLGEMVTATQSVSDEILELLGSEMNYKVEMVSPEDEDRELLESFDISFGDPGSSDEELMSRPPVVTVMGHVDHGKTRLLDTIRKANVQAGEAGGITQHIGAYQVITELEGNERPITFIDTPGHEAFTAMRARGAKSTDIAVLVVAADDGVMPQTVEALNHAQAAGVPIVVAVNKIDVEGANPAKVRQQLTEYNLVAEEYGGETMFVDISARQGTNIESLLEAILLTADATLDLRANPSMEAQGVAIEAHLDRGRGPVATVLVQRGTLRVGDSVVAGNAFGRVRRMINEHDEDVTEALPSRPVQVIGFTSVPGAGDTFLVVDEDRVARQIADRRGARIREAQNAAKRKRVSLEDLDKVLKETNQLNLIIKGDNSGTVEALEESLTKIEVGEEVELRVIHRGVGGINESDINLATAENTIVLGFNVRAEGKAAEVANREGVEIRYYSVIYRAIEDIEQALKGMLKPEYEEVELGRAEVREVFKSSKVGTIAGCMVTDGIMRRNAKARLLRDNVVISENLTVTSLKRFKDDATEVRDGFECGLTLSYSDIKVDDIIETYEMREKPRA.

Positions 31–433 (YVKSASSTVE…GGVRLPRGNG (403 aa)) are disordered. The segment covering 57-68 (KKGGGDSNGRAG) has biased composition (gly residues). Over residues 110-122 (GPKPGPKPGPKAP) the composition is skewed to pro residues. Low complexity predominate over residues 123-145 (APETKPFEEAPAPAAKADAPAQP). The segment covering 148-171 (EQPRSEQPRSEQPRSEQPRSERSG) has biased composition (basic and acidic residues). Composition is skewed to pro residues over residues 174 to 188 (PGGPKPGPKPGPKPG) and 201 to 212 (PPKPQSPKPGPR). Gly residues predominate over residues 237–268 (PGGGQRQGGQGPGRGGPQGGRPDRQGGGGQGA). Positions 293–302 (GMMPPRPNPG) are enriched in pro residues. Residues 311–397 (SGGGPGGGRG…GAAGAFGRPG (87 aa)) show a composition bias toward gly residues. A compositionally biased stretch (basic residues) spans 401-410 (RRGRKSKRQK). The region spanning 523 to 695 (SRPPVVTVMG…ILLTADATLD (173 aa)) is the tr-type G domain. Residues 532–539 (GHVDHGKT) form a G1 region. A GTP-binding site is contributed by 532–539 (GHVDHGKT). A G2 region spans residues 557–561 (GITQH). Residues 582 to 585 (DTPG) form a G3 region. Residues 582-586 (DTPGH) and 636-639 (NKID) each bind GTP. The interval 636–639 (NKID) is G4. The G5 stretch occupies residues 672-674 (SAR).

This sequence belongs to the TRAFAC class translation factor GTPase superfamily. Classic translation factor GTPase family. IF-2 subfamily.

The protein resides in the cytoplasm. In terms of biological role, one of the essential components for the initiation of protein synthesis. Protects formylmethionyl-tRNA from spontaneous hydrolysis and promotes its binding to the 30S ribosomal subunits. Also involved in the hydrolysis of GTP during the formation of the 70S ribosomal complex. The protein is Translation initiation factor IF-2 of Saccharopolyspora erythraea (strain ATCC 11635 / DSM 40517 / JCM 4748 / NBRC 13426 / NCIMB 8594 / NRRL 2338).